A 122-amino-acid polypeptide reads, in one-letter code: UPF0102 protein VCM66_0538 (122 aa).

Belongs to the UPF0102 family.

The chain is UPF0102 protein VCM66_0538 from Vibrio cholerae serotype O1 (strain M66-2).